Consider the following 441-residue polypeptide: tRNA(Ile)-lysidine synthase (441 aa).

27 to 32 is a binding site for ATP; it reads SGGVDS.

This sequence belongs to the tRNA(Ile)-lysidine synthase family.

The protein localises to the cytoplasm. The catalysed reaction is cytidine(34) in tRNA(Ile2) + L-lysine + ATP = lysidine(34) in tRNA(Ile2) + AMP + diphosphate + H(+). Functionally, ligates lysine onto the cytidine present at position 34 of the AUA codon-specific tRNA(Ile) that contains the anticodon CAU, in an ATP-dependent manner. Cytidine is converted to lysidine, thus changing the amino acid specificity of the tRNA from methionine to isoleucine. The chain is tRNA(Ile)-lysidine synthase from Proteus mirabilis (strain HI4320).